The following is a 243-amino-acid chain: Vesicle-associated membrane protein-associated protein B (243 aa).

Ala-2 is subject to N-acetylalanine. Residues 2–218 are Cytoplasmic-facing; sequence AKVEQVLSLE…AALAATGKEE (217 aa). The MSP domain occupies 7–124; that stretch reads VLSLEPQHEL…MDSKLRCVFE (118 aa). Position 146 is a phosphoserine (Ser-146). Lys-147 participates in a covalent cross-link: Glycyl lysine isopeptide (Lys-Gly) (interchain with G-Cter in SUMO1). A phosphoserine mark is found at Ser-156 and Ser-159. Positions 161 to 196 form a coiled coil; that stretch reads LDDTEVKKVMEECRRLQGEVQRLREESRQLKEEDGL. Residue Ser-206 is modified to Phosphoserine. The chain crosses the membrane as a helical; Anchor for type IV membrane protein span at residues 219–239; that stretch reads GLSARLLALVVLFFIVGVIIG.

The protein belongs to the VAMP-associated protein (VAP) (TC 9.B.17) family. Homodimer, and heterodimer with VAPA. Interacts with VAMP1 and VAMP2. Interacts (via MSP domain) with ZFYVE27. Interacts with RMDN3. Interacts with KIF5A in a ZFYVE27-dependent manner. Interacts (via MSP domain) with STARD3 (via phospho-FFAT motif). Interacts with STARD3NL (via FFAT motif). Interacts with CERT1. Interacts with PLEKHA3 and SACM1L to form a ternary complex. Interacts with VPS13A (via FFAT motif). Interacts with RB1CC1 (via phosphorylated FFAT motif), MIGA2 (via phosphorylated FFAT motif), RMDN3 (via phosphorylated FFAT motif), OSBPL1A (via FFAT motif), KCNB1 (via phosphorylated FFAT motif) and KCNB2 (via phosphorylated FFAT motif). Interacts (via MSP domain) with WDR44 (via FFAT motif); the interactions connect the endoplasmic reticulum (ER) with the endosomal tubule.

The protein localises to the endoplasmic reticulum membrane. Its function is as follows. Endoplasmic reticulum (ER)-anchored protein that mediates the formation of contact sites between the ER and endosomes via interaction with FFAT motif-containing proteins such as STARD3 or WDR44. Interacts with STARD3 in a FFAT motif phosphorylation dependent manner. Via interaction with WDR44 participates in neosynthesized protein export. Participates in the endoplasmic reticulum unfolded protein response (UPR) by inducing ERN1/IRE1 activity. Involved in cellular calcium homeostasis regulation. The polypeptide is Vesicle-associated membrane protein-associated protein B (Mus musculus (Mouse)).